Reading from the N-terminus, the 297-residue chain is MSAPTTNAAPRAKTGYADRFKGGVIMDVVNPEQARIAEAAGAVAVMALERVPADIRAQGGVSRMSDPDMIDGILEAVDIPVMAKARIGHFVEAQVLQSLGVHFIDESEVLTPADYANHIDKFAFEVPFVCGATNLGEALRRVNEGAAMIRSKGEAGTGDVSNAVTHMRTIRAEINRLTSMAEDELYVAAKELQAPYELVVHVAREGKLPVPLLTAGGIATPADAAMMMQLGADGVFVGSGIFKSGNPEQRARAIVAATQNYNDPDTIARVSRGLGEAMVGINVDDLPVSHRLAERGW.

D27 contacts D-ribose 5-phosphate. Residue K84 is the Schiff-base intermediate with D-ribose 5-phosphate of the active site. Position 156 (G156) interacts with D-ribose 5-phosphate. R168 is a binding site for D-glyceraldehyde 3-phosphate. D-ribose 5-phosphate contacts are provided by residues G217 and 238–239; that span reads GS.

The protein belongs to the PdxS/SNZ family. In terms of assembly, in the presence of PdxT, forms a dodecamer of heterodimers.

The enzyme catalyses aldehydo-D-ribose 5-phosphate + D-glyceraldehyde 3-phosphate + L-glutamine = pyridoxal 5'-phosphate + L-glutamate + phosphate + 3 H2O + H(+). It functions in the pathway cofactor biosynthesis; pyridoxal 5'-phosphate biosynthesis. In terms of biological role, catalyzes the formation of pyridoxal 5'-phosphate from ribose 5-phosphate (RBP), glyceraldehyde 3-phosphate (G3P) and ammonia. The ammonia is provided by the PdxT subunit. Can also use ribulose 5-phosphate and dihydroxyacetone phosphate as substrates, resulting from enzyme-catalyzed isomerization of RBP and G3P, respectively. The polypeptide is Pyridoxal 5'-phosphate synthase subunit PdxS (Corynebacterium efficiens (strain DSM 44549 / YS-314 / AJ 12310 / JCM 11189 / NBRC 100395)).